The chain runs to 160 residues: uncharacterized protein (160 aa).

A signal peptide spans 1–25 (MKVTLLLLLIAVLLLLLIFMKVCKQ).

This is an uncharacterized protein from Invertebrate iridescent virus 6 (IIV-6).